The following is a 102-amino-acid chain: ATP-dependent Clp protease adapter protein ClpS (102 aa).

It belongs to the ClpS family. Binds to the N-terminal domain of the chaperone ClpA.

Involved in the modulation of the specificity of the ClpAP-mediated ATP-dependent protein degradation. The protein is ATP-dependent Clp protease adapter protein ClpS of Shewanella putrefaciens (strain CN-32 / ATCC BAA-453).